A 221-amino-acid chain; its full sequence is UPF0758 protein NTHI1125 (221 aa).

An MPN domain is found at 98-221; the sequence is PIINDLETVK…CYSFAENCLL (124 aa). Zn(2+) is bound by residues H170, H172, and D183. The JAMM motif signature appears at 170–183; sequence HNHPSGITEPSYSD.

This sequence belongs to the UPF0758 family.

This Haemophilus influenzae (strain 86-028NP) protein is UPF0758 protein NTHI1125.